We begin with the raw amino-acid sequence, 237 residues long: Carboxy-S-adenosyl-L-methionine synthase (237 aa).

S-adenosyl-L-methionine is bound by residues Tyr36, 61–63 (GAS), 86–87 (DN), 112–113 (DI), Asn127, and Arg194.

Belongs to the class I-like SAM-binding methyltransferase superfamily. Cx-SAM synthase family. Homodimer.

The enzyme catalyses prephenate + S-adenosyl-L-methionine = carboxy-S-adenosyl-L-methionine + 3-phenylpyruvate + H2O. In terms of biological role, catalyzes the conversion of S-adenosyl-L-methionine (SAM) to carboxy-S-adenosyl-L-methionine (Cx-SAM). The sequence is that of Carboxy-S-adenosyl-L-methionine synthase from Ruthia magnifica subsp. Calyptogena magnifica.